We begin with the raw amino-acid sequence, 703 residues long: Antigen peptide transporter 2 (703 aa).

Residues 1–6 are Lumenal-facing; that stretch reads MALSHP. The chain crosses the membrane as a helical span at residues 7–27; the sequence is RPWASLLLVDLALLGLLQSSL. Topologically, residues 28-56 are cytoplasmic; sequence GTLLPPGLPGLWLEGTLRLGVLWGLLKVG. The helical transmembrane segment at 57–77 threads the bilayer; sequence GLLRLVGTFLPLLCLTNPLFF. At 78-98 the chain is on the lumenal side; it reads SLRALVGSTMSTSVVRVASAS. The helical transmembrane segment at 99 to 119 threads the bilayer; sequence WGWLLADYGAVALSLAVWAVL. Over 120-148 the chain is Cytoplasmic; it reads SPAGAQEKEPGQENNRALMIRLLRLSKPD. The chain crosses the membrane as a helical span at residues 149–169; sequence LPFLIVAFIFLAMAVWWEMFI. The region spanning 152 to 435 is the ABC transmembrane type-1 domain; the sequence is LIVAFIFLAM…LVYMYGDMLS (284 aa). Topologically, residues 170–187 are lumenal; that stretch reads PHYSGRVIDILGGDFDPD. Residues 188–208 form a helical membrane-spanning segment; the sequence is AFASAIFFMCLFSVGSSLSAG. Residues 209–266 are Cytoplasmic-facing; the sequence is CRGGSFLFAESRINLRIREQLFSSLLRQDLAFFQETKTGELNSRLSSDTSLMSQWLSL. The helical transmembrane segment at 267–287 threads the bilayer; sequence NANILLRSLVKVVGLYYFMLQ. Residues 288-293 are Lumenal-facing; that stretch reads VSPRLT. A helical membrane pass occupies residues 294 to 314; sequence FLSLLDLPLTIAAEKVYNPRH. The tract at residues 301 to 389 is part of the peptide-binding site; that stretch reads PLTIAAEKVY…QRVMALGMQV (89 aa). Residues 315–374 lie on the Cytoplasmic side of the membrane; it reads QAVLKEIQDAVAKAGQVVREAVGGLQTVRSFGAEEQEVRRYKEALERCRQLWWRRDLEKS. The helical transmembrane segment at 375–395 threads the bilayer; that stretch reads LYLVIQRVMALGMQVLILNVG. Topologically, residues 396–408 are lumenal; that stretch reads VQQILAGEVTRGG. A helical transmembrane segment spans residues 409–429; the sequence is LLSFLLYQEEVGHHVQNLVYM. The tract at residues 414–433 is part of the peptide-binding site; the sequence is LYQEEVGHHVQNLVYMYGDM. Over 430–703 the chain is Cytoplasmic; the sequence is YGDMLSNVGA…AHLVQQRLEA (274 aa). The 235-residue stretch at 468-702 folds into the ABC transporter domain; the sequence is VEFQDVSFSY…YAHLVQQRLE (235 aa). 503–510 serves as a coordination point for ATP; that stretch reads GPNGSGKS.

The protein belongs to the ABC transporter superfamily. ABCB family. MHC peptide exporter (TC 3.A.1.209) subfamily. In terms of assembly, heterodimer of TAP1 and TAP2 (TAP1-TAP2). A component of the peptide loading complex (PLC), interacts via TAPBP with MHCI heterodimer; this interaction mediates peptide-MHCI assembly. It depends on Mg(2+) as a cofactor.

It is found in the endoplasmic reticulum membrane. It carries out the reaction a peptide antigen(in) + ATP + H2O = a peptide antigen(out) + ADP + phosphate + H(+). Functionally, ABC transporter associated with antigen processing. In complex with TAP1 mediates unidirectional translocation of peptide antigens from cytosol to endoplasmic reticulum (ER) for loading onto MHC class I (MHCI) molecules. Uses the chemical energy of ATP to export peptides against the concentration gradient. During the transport cycle alternates between 'inward-facing' state with peptide binding site facing the cytosol to 'outward-facing' state with peptide binding site facing the ER lumen. Peptide antigen binding to ATP-loaded TAP1-TAP2 induces a switch to hydrolysis-competent 'outward-facing' conformation ready for peptide loading onto nascent MHCI molecules. Subsequently ATP hydrolysis resets the transporter to the 'inward facing' state for a new cycle. As a component of the peptide loading complex (PLC), acts as a molecular scaffold essential for peptide-MHCI assembly and antigen presentation. The polypeptide is Antigen peptide transporter 2 (Tap2) (Rattus norvegicus (Rat)).